A 101-amino-acid polypeptide reads, in one-letter code: ATP-dependent Clp protease adapter protein ClpS 2 (101 aa).

Belongs to the ClpS family. As to quaternary structure, binds to the N-terminal domain of the chaperone ClpA.

Functionally, involved in the modulation of the specificity of the ClpAP-mediated ATP-dependent protein degradation. The chain is ATP-dependent Clp protease adapter protein ClpS 2 from Mesorhizobium japonicum (strain LMG 29417 / CECT 9101 / MAFF 303099) (Mesorhizobium loti (strain MAFF 303099)).